The sequence spans 369 residues: Omega-amidase, chloroplastic (369 aa).

Residues 1 to 63 (MKSAISSSLF…SALRSISSSM (63 aa)) constitute a chloroplast transit peptide. At Ala-64 the chain carries N-acetylalanine. Positions 88–337 (FNIGLCQLSV…EAIIIAEIDY (250 aa)) constitute a CN hydrolase domain. Residue Glu-127 is the Proton acceptor of the active site. Catalysis depends on Lys-201, which acts as the Proton donor. The active-site Nucleophile is the Cys-242.

The protein belongs to the nitrilase superfamily. NIT1/NIT2 family.

It localises to the plastid. The protein localises to the chloroplast. The enzyme catalyses a monoamide of a dicarboxylate + H2O = a dicarboxylate + NH4(+). Omega-amidase involved in the metabolism of asparagine. Probably also closely coupled with glutamine transamination in the methionine salvage cycle. Can use alpha-ketosuccinamate and alpha-hydroxysuccinamate as substrates, producing respectively oxaloacetate and malate, or alpha-ketoglutaramate, producing alpha-ketoglutarate. This is Omega-amidase, chloroplastic from Arabidopsis thaliana (Mouse-ear cress).